The following is a 648-amino-acid chain: Putative potassium transport protein DDB_G0292412 (648 aa).

The chain crosses the membrane as a helical span at residues 48-68; the sequence is LFLLVILVQLGSTVLLTLPIV. Residue N81 is glycosylated (N-linked (GlcNAc...) asparagine). 2 disordered regions span residues 106-145 and 223-261; these read HDFK…DDND and QQQQ…DSQS. Over residues 110-129 the composition is skewed to acidic residues; sequence DDDDENDNNNNEENDDNDDE. Residues 199 to 227 adopt a coiled-coil conformation; it reads IIQQQQQQQQQQQQQQQQQQQQQQQQQQQ. Residues N239, N243, N247, N248, N254, and N257 are each glycosylated (N-linked (GlcNAc...) asparagine). A run of 6 helical transmembrane segments spans residues 313–333, 353–373, 385–405, 443–463, 472–491, and 505–525; these read LLVI…ISIG, GWWW…LALF, FLLI…PVFL, VQLF…MALL, NMNY…STRT, and SVLL…IISL. An N-linked (GlcNAc...) asparagine glycan is attached at N536. 3 consecutive transmembrane segments (helical) span residues 550–570, 571–591, and 592–612; these read IFVP…LLES, GVIT…NVGL, and SISI…MLAG.

Belongs to the TrkH potassium transport family.

It is found in the membrane. May function as a potassium transporter. The chain is Putative potassium transport protein DDB_G0292412 from Dictyostelium discoideum (Social amoeba).